Here is a 957-residue protein sequence, read N- to C-terminus: Glycine dehydrogenase (decarboxylating) (957 aa).

An N6-(pyridoxal phosphate)lysine modification is found at lysine 708.

The protein belongs to the GcvP family. In terms of assembly, the glycine cleavage system is composed of four proteins: P, T, L and H. Requires pyridoxal 5'-phosphate as cofactor.

It carries out the reaction N(6)-[(R)-lipoyl]-L-lysyl-[glycine-cleavage complex H protein] + glycine + H(+) = N(6)-[(R)-S(8)-aminomethyldihydrolipoyl]-L-lysyl-[glycine-cleavage complex H protein] + CO2. In terms of biological role, the glycine cleavage system catalyzes the degradation of glycine. The P protein binds the alpha-amino group of glycine through its pyridoxal phosphate cofactor; CO(2) is released and the remaining methylamine moiety is then transferred to the lipoamide cofactor of the H protein. The chain is Glycine dehydrogenase (decarboxylating) from Salmonella heidelberg (strain SL476).